The sequence spans 277 residues: Undecaprenyl-diphosphatase 1 (277 aa).

7 consecutive transmembrane segments (helical) span residues 46–66 (VVGF…VYFF), 95–115 (WWVI…KSLI), 119–139 (LASL…MWAA), 165–185 (ILAL…TALI), 191–211 (VAAT…AGLY), 216–236 (ALGT…SFVV), and 256–276 (FVIY…TGVL).

This sequence belongs to the UppP family.

The protein resides in the cell membrane. It catalyses the reaction di-trans,octa-cis-undecaprenyl diphosphate + H2O = di-trans,octa-cis-undecaprenyl phosphate + phosphate + H(+). Functionally, catalyzes the dephosphorylation of undecaprenyl diphosphate (UPP). Confers resistance to bacitracin. The chain is Undecaprenyl-diphosphatase 1 from Streptomyces avermitilis (strain ATCC 31267 / DSM 46492 / JCM 5070 / NBRC 14893 / NCIMB 12804 / NRRL 8165 / MA-4680).